The primary structure comprises 474 residues: PRAME family member 1 (474 aa).

The stretch at 97 to 124 is one LRR 1; degenerate repeat; it reads RWKLQVLDLRDVDENFWARWPGAWALSC. One copy of the LRR 2; degenerate repeat lies at 179-203; it reads HLCCSKLVNYLTPIKYLRKSLKIIY. The LRR 3; degenerate repeat unit spans residues 204 to 230; sequence LNSIQELEIRNMSWPRLIRKLRCYLKE. The LRR 4; degenerate repeat unit spans residues 231–265; that stretch reads MKNLRKLVFSRCHHYTSDNELEGRLVAKFSSVFLR. 5 LRR repeats span residues 266-291, 292-323, 324-342, 348-375, and 376-400; these read LEHL…IRCL, QNPL…GYLK, HLNL…PLGA, AASL…GLSR, and CSQL…LLRH.

The protein belongs to the PRAME family.

This Homo sapiens (Human) protein is PRAME family member 1.